A 311-amino-acid chain; its full sequence is HTH-type transcriptional regulator DsdC (311 aa).

Residues Trp15–Thr72 enclose the HTH lysR-type domain. Positions Phe32–Asn51 form a DNA-binding region, H-T-H motif.

This sequence belongs to the LysR transcriptional regulatory family.

In terms of biological role, regulates the expression of the dsdX-dsdA operon. This Escherichia coli (strain K12) protein is HTH-type transcriptional regulator DsdC.